Here is a 259-residue protein sequence, read N- to C-terminus: Type III pantothenate kinase (259 aa).

6-13 (DVGNTNCT) serves as a coordination point for ATP. 107 to 110 (GSDR) is a substrate binding site. The Proton acceptor role is filled by Asp-109. Residue Asp-129 participates in K(+) binding. An ATP-binding site is contributed by Thr-132. Thr-184 contacts substrate.

It belongs to the type III pantothenate kinase family. Homodimer. Requires NH4(+) as cofactor. It depends on K(+) as a cofactor.

It is found in the cytoplasm. The enzyme catalyses (R)-pantothenate + ATP = (R)-4'-phosphopantothenate + ADP + H(+). Its pathway is cofactor biosynthesis; coenzyme A biosynthesis; CoA from (R)-pantothenate: step 1/5. Its function is as follows. Catalyzes the phosphorylation of pantothenate (Pan), the first step in CoA biosynthesis. This is Type III pantothenate kinase from Listeria welshimeri serovar 6b (strain ATCC 35897 / DSM 20650 / CCUG 15529 / CIP 8149 / NCTC 11857 / SLCC 5334 / V8).